Here is a 351-residue protein sequence, read N- to C-terminus: Putative aminodehydroquinate synthase (351 aa).

Residues glutamate 65–lysine 68, glycine 97–aspartate 101, threonine 121–serine 122, lysine 134, lysine 143, and tyrosine 161–threonine 164 contribute to the NAD(+) site. The Zn(2+) site is built by glutamate 176, histidine 225, and histidine 241.

This sequence belongs to the sugar phosphate cyclases superfamily. aDHQS family. The cofactor is NAD(+). Co(2+) is required as a cofactor. Requires Zn(2+) as cofactor.

In terms of biological role, may catalyze the conversion of 3,4-dideoxy-4-amino-D-arabino-heptulosonate 7-phosphate (aDAHP) to 5-deoxy-5-amino-3-dehydroquinate (aDHQ). Probably involved in the formation of 3-amino-5-hydroxybenzoic acid (AHBA), the precursor of rifamycin and related ansamycins. This chain is Putative aminodehydroquinate synthase, found in Amycolatopsis mediterranei (strain S699) (Nocardia mediterranei).